The following is a 644-amino-acid chain: Acetyl-coenzyme A synthetase 2 (644 aa).

CoA contacts are provided by residues 189-192 (RGGK), threonine 307, and asparagine 331. Residues 383–385 (GEP), 407–412 (DTWWQT), aspartate 496, and arginine 511 contribute to the ATP site. Serine 519 lines the CoA pocket. Residue arginine 522 participates in ATP binding. Residues valine 533, histidine 535, and valine 538 each contribute to the Mg(2+) site. Residue lysine 605 is modified to N6-acetyllysine.

The protein belongs to the ATP-dependent AMP-binding enzyme family. The cofactor is Mg(2+). Acetylated. Deacetylation by the SIR2-homolog deacetylase activates the enzyme.

It catalyses the reaction acetate + ATP + CoA = acetyl-CoA + AMP + diphosphate. Its function is as follows. Catalyzes the conversion of acetate into acetyl-CoA (AcCoA), an essential intermediate at the junction of anabolic and catabolic pathways. AcsA undergoes a two-step reaction. In the first half reaction, AcsA combines acetate with ATP to form acetyl-adenylate (AcAMP) intermediate. In the second half reaction, it can then transfer the acetyl group from AcAMP to the sulfhydryl group of CoA, forming the product AcCoA. The sequence is that of Acetyl-coenzyme A synthetase 2 from Pseudomonas putida (strain ATCC 47054 / DSM 6125 / CFBP 8728 / NCIMB 11950 / KT2440).